The following is a 100-amino-acid chain: MKHITNKAELDQLLSTNKKVVVDFYANWCGPCKILGPIFEEVAQDKKDWTFVKVDVDQANEISSEYEIRSIPTVIFFQDGKMADKRIGFIPKNELKELLK.

In terms of domain architecture, Thioredoxin spans 1 to 100; the sequence is MKHITNKAEL…PKNELKELLK (100 aa). A disulfide bridge connects residues Cys-29 and Cys-32.

Belongs to the thioredoxin family.

In terms of biological role, participates in various redox reactions through the reversible oxidation of its active center dithiol to a disulfide and catalyzes dithiol-disulfide exchange reactions. This chain is Thioredoxin (trxA), found in Mycoplasmoides gallisepticum (strain R(low / passage 15 / clone 2)) (Mycoplasma gallisepticum).